Reading from the N-terminus, the 599-residue chain is Elongation factor 4 (599 aa).

The region spanning 5-187 (KNIRNFSIIA…QLVERIPAPE (183 aa)) is the tr-type G domain. GTP contacts are provided by residues 17–22 (DHGKST) and 134–137 (NKID).

It belongs to the TRAFAC class translation factor GTPase superfamily. Classic translation factor GTPase family. LepA subfamily.

Its subcellular location is the cell inner membrane. The catalysed reaction is GTP + H2O = GDP + phosphate + H(+). Its function is as follows. Required for accurate and efficient protein synthesis under certain stress conditions. May act as a fidelity factor of the translation reaction, by catalyzing a one-codon backward translocation of tRNAs on improperly translocated ribosomes. Back-translocation proceeds from a post-translocation (POST) complex to a pre-translocation (PRE) complex, thus giving elongation factor G a second chance to translocate the tRNAs correctly. Binds to ribosomes in a GTP-dependent manner. The sequence is that of Elongation factor 4 from Alcanivorax borkumensis (strain ATCC 700651 / DSM 11573 / NCIMB 13689 / SK2).